A 166-amino-acid polypeptide reads, in one-letter code: ATP synthase subunit b (166 aa).

A helical transmembrane segment spans residues 10 to 30 (LLFWMIVSFGIVFVILSKYGF).

Belongs to the ATPase B chain family. In terms of assembly, F-type ATPases have 2 components, F(1) - the catalytic core - and F(0) - the membrane proton channel. F(1) has five subunits: alpha(3), beta(3), gamma(1), delta(1), epsilon(1). F(0) has three main subunits: a(1), b(2) and c(10-14). The alpha and beta chains form an alternating ring which encloses part of the gamma chain. F(1) is attached to F(0) by a central stalk formed by the gamma and epsilon chains, while a peripheral stalk is formed by the delta and b chains.

It is found in the cell inner membrane. Its function is as follows. F(1)F(0) ATP synthase produces ATP from ADP in the presence of a proton or sodium gradient. F-type ATPases consist of two structural domains, F(1) containing the extramembraneous catalytic core and F(0) containing the membrane proton channel, linked together by a central stalk and a peripheral stalk. During catalysis, ATP synthesis in the catalytic domain of F(1) is coupled via a rotary mechanism of the central stalk subunits to proton translocation. Functionally, component of the F(0) channel, it forms part of the peripheral stalk, linking F(1) to F(0). The chain is ATP synthase subunit b from Parabacteroides distasonis (strain ATCC 8503 / DSM 20701 / CIP 104284 / JCM 5825 / NCTC 11152).